The primary structure comprises 815 residues: RNA-binding protein 5 (815 aa).

Residues 1–93 (MGSDKRVSRT…EHDYRHDISD (93 aa)) form a disordered region. Phosphoserine occurs at positions 18, 59, 69, 72, and 78. The RRM 1 domain maps to 98 to 178 (KTIMLRGLPI…KHIAMHYSNP (81 aa)). A RanBP2-type zinc finger spans residues 181-210 (KFEDWLCNKCCLNNFRKRLKCFRCGADKFD). The RRM 2 domain maps to 231-315 (DTIILRNIAP…KTIGVDFAKS (85 aa)). The segment at 321 to 809 (VLSDGNRVSA…KDAVRKAMFA (489 aa)) is required for interaction with U2AF2. Residues 411 to 422 (QSPQLYNQTSNP) show a composition bias toward polar residues. Disordered regions lie at residues 411–468 (QSPQ…DESS) and 507–540 (PAAE…AQQI). Low complexity predominate over residues 426-446 (PTEEAQPSTSTSTQAPAASPT). Ser-444 carries the phosphoserine modification. Residues 452-535 (TKYAVPDTST…KEKKEKPKSK (84 aa)) are sufficient for interaction with ACIN1, PRPF8, SFRS3, SNRPB, SNRPN, SNRNP70 and SNRNP200. 2 positions are modified to phosphoserine: Ser-621 and Ser-624. The C2H2-type; atypical zinc finger occupies 647 to 677 (MACLLCRRQFPNKDALVRHQQLSDLHKQNMD). Residues 743–789 (HSNIGNKMLQAMGWREGSGLGRKCQGITAPIEAQVRLKGAGLGAKGS) enclose the G-patch domain.

It belongs to the RBM5/RBM10 family. Component of the spliceosome A complex (also known as the prespliceosome). Appears to dissociate from the spliceosome upon formation of the spliceosome B complex (also known as the precatalytic spliceosome), in which the heterotrimeric U4/U6.U5 snRNPs are bound. Interacts with U2AF2; this interaction is direct. Also interacts with ACIN1, PRPF8, SFRS3, SNRPB, SNRPN, SNRNP70 and SNRNP200; these interactions may be indirect. As to expression, isoform 5 is widely expressed in normal tissues and is expressed at increased levels in T-leukemic cell lines.

The protein localises to the nucleus. Functionally, component of the spliceosome A complex. Binds to ssRNA containing the consensus sequence 5'-AGGUAA-3'. Regulates alternative splicing of a number of mRNAs. May modulate splice site pairing after recruitment of the U1 and U2 snRNPs to the 5' and 3' splice sites of the intron. May both positively and negatively regulate apoptosis by regulating the alternative splicing of several genes involved in this process, including FAS and CASP2/caspase-2. In the case of FAS, promotes exclusion of exon 6 thereby producing a soluble form of FAS that inhibits apoptosis. In the case of CASP2/caspase-2, promotes exclusion of exon 9 thereby producing a catalytically active form of CASP2/Caspase-2 that induces apoptosis. The protein is RNA-binding protein 5 (RBM5) of Homo sapiens (Human).